Reading from the N-terminus, the 403-residue chain is Phosphoglycerate kinase (403 aa).

Substrate-binding positions include 22 to 24 (DLN), Arg-37, 60 to 63 (HLGR), Arg-119, and Arg-156. Residues Lys-206, Gly-302, Glu-333, and 359–362 (GGDS) each bind ATP.

Belongs to the phosphoglycerate kinase family. In terms of assembly, monomer.

Its subcellular location is the cytoplasm. The enzyme catalyses (2R)-3-phosphoglycerate + ATP = (2R)-3-phospho-glyceroyl phosphate + ADP. Its pathway is carbohydrate degradation; glycolysis; pyruvate from D-glyceraldehyde 3-phosphate: step 2/5. The sequence is that of Phosphoglycerate kinase from Leifsonia xyli subsp. xyli (strain CTCB07).